A 266-amino-acid chain; its full sequence is Chymotrypsin-like elastase family member 1 (266 aa).

A signal peptide spans 1–16 (MLRLLVFTSLVLYGHS). The propeptide at 17 to 26 (TQDFPETNAR) is activation peptide. One can recognise a Peptidase S1 domain in the interval 27–264 (VVGGTAVSKN…YISWINNAIA (238 aa)). An intrachain disulfide couples Cys-56 to Cys-72. The active-site Charge relay system is His-71. Residues Asp-85, Asn-87, Gln-90, and Glu-95 each contribute to the Ca(2+) site. Residue Asn-87 is glycosylated (N-linked (GlcNAc...) asparagine). Asp-119 acts as the Charge relay system in catalysis. Disulfide bonds link Cys-153/Cys-220, Cys-184/Cys-200, and Cys-210/Cys-240. Catalysis depends on Ser-214, which acts as the Charge relay system. Asn-241 carries an N-linked (GlcNAc...) asparagine glycan.

This sequence belongs to the peptidase S1 family. Elastase subfamily. Ca(2+) is required as a cofactor. Pancreas.

Its subcellular location is the secreted. The catalysed reaction is Hydrolysis of proteins, including elastin. Preferential cleavage: Ala-|-Xaa.. Serine proteases that hydrolyze many proteins in addition to elastin. This Bos taurus (Bovine) protein is Chymotrypsin-like elastase family member 1 (CELA1).